The sequence spans 140 residues: MKMFQSLSLLPRIVSPFRKCYSTDLISLVGVPRVKITKGQNRYLLVNIHTHGFTKYGRVIVRGADVENHLTIFDSILEELEPQGICAKILGGGRILNETDSKKMKIYGTSRTFGSADHTRTRNILQSWTTYKDFKITVKN.

Arg42 contacts substrate. His69 serves as the catalytic Proton acceptor. 110-112 (SRT) contacts substrate.

Belongs to the janus family.

Functionally, janA and janB regulate somatic sex differentiation. In Drosophila erecta (Fruit fly), this protein is Sex-regulated protein janus-B (janB).